We begin with the raw amino-acid sequence, 313 residues long: WD repeat-containing protein 82 (313 aa).

WD repeat units follow at residues E19 to T58, G105 to L144, H146 to F184, D192 to T231, A236 to V276, and K280 to D313.

It belongs to the WD repeat SWD2 family. In terms of assembly, component of the SET1/COMPASS complex, at least composed of the catalytic subunit (SETD1A or SETD1B), WDR5, WDR82, RBBP5, ASH2L/ASH2, CXXC1/CFP1, HCFC1 and DPY30. Component of the PNUTS-PP1 phosphatase complex, composed of PPP1R10/PNUTS, TOX4, WDR82, and PPP1CA or PPP1CB or PPP1CC. Associated with multiple protein complexes including an RNA polymerase II complex, MLL3/MLL4 complex and a chaperonin-containing TCP1 complex. Interacts with SETD1B (via N-terminal region); the interaction is direct. Interacts with SETD1A (via N-terminal region); the interaction is direct. Interacts with CUL4B. Interacts with RBBP5. Interacts with POLR2B. Interacts with hyperphosphorylated C-terminal domain (CTD) of RNA polymerase II large subunit (POLR2A). Binds specifically to CTD heptad repeats phosphorylated on 'Ser-5' of each heptad. SETD1A enhances its interaction with POLR2A. Interacts with PPP1R10/PNUTS. Interacts with PPP1CA in the presence of PPP1R10/PNUTS. Interacts with ZC3H4; interaction is independent of the SET1 complex and promotes transcription termination of long non-coding RNAs (lncRNAs).

The protein resides in the nucleus. Its subcellular location is the chromosome. The protein localises to the cytoplasm. In terms of biological role, regulatory component of the SET1/COMPASS complex implicated in the tethering of this complex to transcriptional start sites of active genes. Facilitates histone H3 'Lys-4' methylation (H3K4me) via recruitment of the SETD1A or SETD1B to the 'Ser-5' phosphorylated C-terminal domain (CTD) of RNA polymerase II large subunit (POLR2A). Component of the PNUTS-PP1 protein phosphatase complex, a protein phosphatase 1 (PP1) complex that promotes RNA polymerase II transcription pause-release, allowing transcription elongation. PNUTS-PP1 also plays a role in the control of chromatin structure and cell cycle progression during the transition from mitosis into interphase. Together with ZC3H4, but independently of the SET1 complex, part of a transcription termination checkpoint that promotes transcription termination of long non-coding RNAs (lncRNAs). The transcription termination checkpoint is activated by the inefficiently spliced first exon of lncRNAs and promotes transcription termination of lncRNAs and their subsequent degradation by the exosome. The sequence is that of WD repeat-containing protein 82 from Homo sapiens (Human).